Here is a 375-residue protein sequence, read N- to C-terminus: Actin (375 aa).

This sequence belongs to the actin family.

Its subcellular location is the cytoplasm. It is found in the cytoskeleton. The enzyme catalyses ATP + H2O = ADP + phosphate + H(+). Its function is as follows. Actins are highly conserved proteins that are involved in various types of cell motility and are ubiquitously expressed in all eukaryotic cells. The chain is Actin from Sterkiella cavicola (Ciliate).